Here is a 292-residue protein sequence, read N- to C-terminus: Phosphoribosylaminoimidazole-succinocarboxamide synthase (292 aa).

It belongs to the SAICAR synthetase family.

The catalysed reaction is 5-amino-1-(5-phospho-D-ribosyl)imidazole-4-carboxylate + L-aspartate + ATP = (2S)-2-[5-amino-1-(5-phospho-beta-D-ribosyl)imidazole-4-carboxamido]succinate + ADP + phosphate + 2 H(+). It participates in purine metabolism; IMP biosynthesis via de novo pathway; 5-amino-1-(5-phospho-D-ribosyl)imidazole-4-carboxamide from 5-amino-1-(5-phospho-D-ribosyl)imidazole-4-carboxylate: step 1/2. The sequence is that of Phosphoribosylaminoimidazole-succinocarboxamide synthase from Thermodesulfovibrio yellowstonii (strain ATCC 51303 / DSM 11347 / YP87).